Here is a 199-residue protein sequence, read N- to C-terminus: Urease accessory protein UreG (199 aa).

Position 8-15 (Gly8–Thr15) interacts with GTP.

The protein belongs to the SIMIBI class G3E GTPase family. UreG subfamily. Homodimer. UreH, UreF and UreG form a complex that acts as a GTP-hydrolysis-dependent molecular chaperone, activating the urease apoprotein by helping to assemble the nickel containing metallocenter of UreC. The UreE protein probably delivers the nickel.

It localises to the cytoplasm. Facilitates the functional incorporation of the urease nickel metallocenter. This process requires GTP hydrolysis, probably effectuated by UreG. The polypeptide is Urease accessory protein UreG (Helicobacter pylori (strain J99 / ATCC 700824) (Campylobacter pylori J99)).